Reading from the N-terminus, the 101-residue chain is Urease subunit beta (101 aa).

It belongs to the urease beta subunit family. Heterotrimer of UreA (gamma), UreB (beta) and UreC (alpha) subunits. Three heterotrimers associate to form the active enzyme.

The protein resides in the cytoplasm. It catalyses the reaction urea + 2 H2O + H(+) = hydrogencarbonate + 2 NH4(+). The protein operates within nitrogen metabolism; urea degradation; CO(2) and NH(3) from urea (urease route): step 1/1. The chain is Urease subunit beta from Verminephrobacter eiseniae (strain EF01-2).